The sequence spans 91 residues: Small ribosomal subunit protein uS19 (91 aa).

This sequence belongs to the universal ribosomal protein uS19 family.

In terms of biological role, protein S19 forms a complex with S13 that binds strongly to the 16S ribosomal RNA. This is Small ribosomal subunit protein uS19 from Metamycoplasma hominis (strain ATCC 23114 / DSM 25592 / NBRC 14850 / NCTC 10111 / PG21) (Mycoplasma hominis).